A 450-amino-acid chain; its full sequence is Cyclin-A2-3 (450 aa).

Disordered stretches follow at residues A18–K53 and N75–A94. The segment covering E23 to V34 has biased composition (polar residues).

It belongs to the cyclin family. Cyclin AB subfamily. Interacts with CDKA-1. Interacts with SAMBA.

It localises to the nucleus. In terms of biological role, negatively regulates endocycles and acts as a regulator of ploidy levels in endoreduplication. Promotes divisions in the guard cells (GCs) after the guard mother cells (GMC) symmetric division. The sequence is that of Cyclin-A2-3 (CYCA2-3) from Arabidopsis thaliana (Mouse-ear cress).